The sequence spans 440 residues: (S)-N-methylcoclaurine 3'-hydroxylase-like protein (440 aa).

The chain crosses the membrane as a helical; Signal-anchor for type II membrane protein span at residues 2–21 (EIVTVALIAIVFTTFLYLIV). A heme-binding site is contributed by Cys-430.

It belongs to the cytochrome P450 family. Heme is required as a cofactor.

Its subcellular location is the membrane. Its function is as follows. Involved in the biosynthesis of benzylisoquinoline alkaloids. Probably involved in papaverine biosynthesis since its transcripts are abundant only in cultivars with substantial papaverine accumulation. May catalyze the 3'-hydroxylation of (S)-coclaurine. This chain is (S)-N-methylcoclaurine 3'-hydroxylase-like protein, found in Papaver somniferum (Opium poppy).